The chain runs to 326 residues: Macrosialin (326 aa).

A signal peptide spans 1 to 20; that stretch reads MRLPVCLILLGPLIAQGTEE. The tract at residues 21-109 is mucin-like; sequence DCPHKKAVTL…ATSPRSSTVG (89 aa). Over 21-291 the chain is Extracellular; that stretch reads DCPHKKAVTL…PCFSCNRDQS (271 aa). The span at 38–58 shows a compositional bias: low complexity; it reads PTATESTASPTTSHRPTTTSH. The tract at residues 38–129 is disordered; the sequence is PTATESTASP…SPRSKGALGN (92 aa). A run of 4 repeats spans residues 44 to 49, 50 to 64, 65 to 72, and 73 to 88. The segment covering 59–69 has biased composition (polar residues); it reads GNVTVHTSSGP. N-linked (GlcNAc...) asparagine glycosylation occurs at Asn60. Over residues 70–80 the composition is skewed to low complexity; sequence TTVTHNPATTT. Positions 81 to 108 are enriched in polar residues; it reads SHGNATISHATVSPTTNGTATSPRSSTV. N-linked (GlcNAc...) asparagine glycosylation is found at Asn84 and Asn97. Residues 111–120 show a composition bias toward pro residues; that stretch reads HPGPPPPSPS. Asn129, Asn134, Asn169, Asn218, Asn233, and Asn251 each carry an N-linked (GlcNAc...) asparagine glycan. The cysteines at positions 139 and 177 are disulfide-linked. Cysteines 249 and 286 form a disulfide. A helical transmembrane segment spans residues 292-316; the sequence is LLLPLIIGLVLLGLLTLVLIAFCIT. Topologically, residues 317-326 are cytoplasmic; it reads RRRQSTYQPL.

This sequence belongs to the LAMP family. Post-translationally, N- and O-glycosylated. In terms of tissue distribution, expressed in tissue macrophages and to a lesser extent in dendritic cells.

It is found in the endosome membrane. Its subcellular location is the lysosome membrane. The protein resides in the cell membrane. In terms of biological role, could play a role in phagocytic activities of tissue macrophages, both in intracellular lysosomal metabolism and extracellular cell-cell and cell-pathogen interactions. Binds to tissue- and organ-specific lectins or selectins, allowing homing of macrophage subsets to particular sites. Rapid recirculation of CD68 from endosomes and lysosomes to the plasma membrane may allow macrophages to crawl over selectin-bearing substrates or other cells. The protein is Macrosialin (Cd68) of Mus musculus (Mouse).